We begin with the raw amino-acid sequence, 680 residues long: ATPase family AAA domain-containing protein FIGL1 (680 aa).

3 disordered regions span residues tyrosine 214–arginine 234, phenylalanine 250–asparagine 275, and valine 288–threonine 352. Residues threonine 295–lysine 308 are compositionally biased toward polar residues. Positions arginine 313–arginine 323 are enriched in gly residues. A compositionally biased stretch (polar residues) spans threonine 336 to serine 346. Residues alanine 406 and glycine 446 to methionine 451 contribute to the ATP site.

The protein belongs to the AAA ATPase family. Requires Mg(2+) as cofactor.

It localises to the nucleus. It catalyses the reaction ATP + H2O = ADP + phosphate + H(+). In terms of biological role, involved in DNA double-strand break (DBS) repair via homologous recombination (HR). Limits class II meiotic crossover (CO) formation by regulating the invasion step of meiotic HR. May counteract DMC1 and RAD51-mediated inter-homolog strand invasion to limit CO formation. Functions independently of FANCM. The chain is ATPase family AAA domain-containing protein FIGL1 from Arabidopsis thaliana (Mouse-ear cress).